The chain runs to 246 residues: 2-C-methyl-D-erythritol 4-phosphate cytidylyltransferase (246 aa).

It belongs to the IspD/TarI cytidylyltransferase family. IspD subfamily.

It carries out the reaction 2-C-methyl-D-erythritol 4-phosphate + CTP + H(+) = 4-CDP-2-C-methyl-D-erythritol + diphosphate. The protein operates within isoprenoid biosynthesis; isopentenyl diphosphate biosynthesis via DXP pathway; isopentenyl diphosphate from 1-deoxy-D-xylulose 5-phosphate: step 2/6. In terms of biological role, catalyzes the formation of 4-diphosphocytidyl-2-C-methyl-D-erythritol from CTP and 2-C-methyl-D-erythritol 4-phosphate (MEP). The chain is 2-C-methyl-D-erythritol 4-phosphate cytidylyltransferase from Clostridium tetani (strain Massachusetts / E88).